A 378-amino-acid chain; its full sequence is MMYSRFRTVAKNLKSTTKPFSFTTATTTTTVSSSEFPQNLTELRARLARESPSLSDFISLKSNNAYSVEVGTKKNPLPKPKWMKESIPGGWKYVQIKKKLRELKLHTVCEEAKCPNMGECWSGGETGTATATIMILGDTCTRGCRFCNVKTSRTPPPPDPDEPTNVAEAIASWGLDYVVITSVGRDDLPDQGSSHFTETVQKLKILKPSILIEALVPDFRGNAECVEKVSKSGLDVFAHNIETVEELQSAVRDHRANFNQSLDVLRMAKDYAPAGTLTKTSIMLGCGETPDQIVKTMEKVRAAGVDVMTFGQYMRPSKRHMPVSEYITPEAFEKYQTLGMEMGFRYVASGPMVRSSYKAGEFYIKSMIDSDRAVSSQS.

Positions 109, 114, 120, 140, 144, 147, and 356 each coordinate [4Fe-4S] cluster. The Radical SAM core domain maps to 125–345 (ETGTATATIM…QTLGMEMGFR (221 aa)).

The protein belongs to the radical SAM superfamily. Lipoyl synthase family. The cofactor is [4Fe-4S] cluster.

Its subcellular location is the mitochondrion. The catalysed reaction is [[Fe-S] cluster scaffold protein carrying a second [4Fe-4S](2+) cluster] + N(6)-octanoyl-L-lysyl-[protein] + 2 oxidized [2Fe-2S]-[ferredoxin] + 2 S-adenosyl-L-methionine + 4 H(+) = [[Fe-S] cluster scaffold protein] + N(6)-[(R)-dihydrolipoyl]-L-lysyl-[protein] + 4 Fe(3+) + 2 hydrogen sulfide + 2 5'-deoxyadenosine + 2 L-methionine + 2 reduced [2Fe-2S]-[ferredoxin]. Its pathway is protein modification; protein lipoylation via endogenous pathway; protein N(6)-(lipoyl)lysine from octanoyl-[acyl-carrier-protein]: step 2/2. Its function is as follows. Catalyzes the radical-mediated insertion of two sulfur atoms into the C-6 and C-8 positions of the octanoyl moiety bound to the lipoyl domains of lipoate-dependent enzymes, thereby converting the octanoylated domains into lipoylated derivatives. The sequence is that of Lipoyl synthase, mitochondrial from Medicago truncatula (Barrel medic).